The primary structure comprises 148 residues: MKALVAVSAVAVVALLGVSSAQADPEADPGAGEANYGGPPSSPRLVDHTEWAQWGSLPSLRVYPSQVGRTASRRLGMAAADAAWAEVLALSPEADTAGMRAQFICHWQYAEIRQPGKPSWNLEPWRPVVDDSEMLASGCNPGSPEESF.

The signal sequence occupies residues 1–23; that stretch reads MKALVAVSAVAVVALLGVSSAQA. The interval 22-45 is disordered; sequence QADPEADPGAGEANYGGPPSSPRL.

This sequence to M.leprae ML2452.

This is an uncharacterized protein from Mycobacterium bovis (strain ATCC BAA-935 / AF2122/97).